The sequence spans 466 residues: Adenosylhomocysteinase (466 aa).

3 residues coordinate substrate: Thr57, Asp132, and Glu192. Residue 193–195 participates in NAD(+) binding; it reads TTT. Lys222 and Asp226 together coordinate substrate. Residues Asn227, 256 to 261, Glu279, Asn314, 335 to 337, and Asn380 each bind NAD(+); these read GYGDVG and IGH.

Belongs to the adenosylhomocysteinase family. The cofactor is NAD(+).

The protein resides in the cytoplasm. It catalyses the reaction S-adenosyl-L-homocysteine + H2O = L-homocysteine + adenosine. Its pathway is amino-acid biosynthesis; L-homocysteine biosynthesis; L-homocysteine from S-adenosyl-L-homocysteine: step 1/1. Its function is as follows. May play a key role in the regulation of the intracellular concentration of adenosylhomocysteine. This Rhizobium etli (strain ATCC 51251 / DSM 11541 / JCM 21823 / NBRC 15573 / CFN 42) protein is Adenosylhomocysteinase.